The sequence spans 374 residues: Peptide chain release factor 2 (374 aa).

The residue at position 256 (Gln-256) is an N5-methylglutamine.

The protein belongs to the prokaryotic/mitochondrial release factor family. Methylated by PrmC. Methylation increases the termination efficiency of RF2.

The protein resides in the cytoplasm. Peptide chain release factor 2 directs the termination of translation in response to the peptide chain termination codons UGA and UAA. This Mycobacterium leprae (strain Br4923) protein is Peptide chain release factor 2.